Reading from the N-terminus, the 203-residue chain is Putative B3 domain-containing protein At1g50220 (203 aa).

Residues 99 to 195 constitute a DNA-binding region (TF-B3); it reads DIVGNVALPK…KFIVLNFQHK (97 aa).

It localises to the nucleus. This is Putative B3 domain-containing protein At1g50220 from Arabidopsis thaliana (Mouse-ear cress).